A 418-amino-acid polypeptide reads, in one-letter code: Serine--tRNA ligase (418 aa).

Residue 227-229 participates in L-serine binding; it reads TSE. ATP contacts are provided by residues 258–260 and Val-274; that span reads RRE. An L-serine-binding site is contributed by Glu-281. Residue 345–348 participates in ATP binding; sequence ELTS. L-serine is bound at residue Thr-380.

The protein belongs to the class-II aminoacyl-tRNA synthetase family. Type-1 seryl-tRNA synthetase subfamily. Homodimer. The tRNA molecule binds across the dimer.

It localises to the cytoplasm. The enzyme catalyses tRNA(Ser) + L-serine + ATP = L-seryl-tRNA(Ser) + AMP + diphosphate + H(+). The catalysed reaction is tRNA(Sec) + L-serine + ATP = L-seryl-tRNA(Sec) + AMP + diphosphate + H(+). The protein operates within aminoacyl-tRNA biosynthesis; selenocysteinyl-tRNA(Sec) biosynthesis; L-seryl-tRNA(Sec) from L-serine and tRNA(Sec): step 1/1. Its function is as follows. Catalyzes the attachment of serine to tRNA(Ser). Is also able to aminoacylate tRNA(Sec) with serine, to form the misacylated tRNA L-seryl-tRNA(Sec), which will be further converted into selenocysteinyl-tRNA(Sec). This chain is Serine--tRNA ligase, found in Rhodococcus jostii (strain RHA1).